The following is a 298-amino-acid chain: Protein DR_1172 (298 aa).

LEA-like repeat units follow at residues 48–117 (DAAQ…NVGQ), 128–197 (DQAK…DVAQ), and 201–270 (QGAQ…AGKQ). Basic and acidic residues predominate over residues 174 to 193 (VQDVKADASKAADQAKDKAQ). Residues 174–298 (VQDVKADASK…MTGNTNTRKN (125 aa)) form a disordered region. The segment covering 194 to 208 (DVAQNVKQGAQQAAS) has biased composition (low complexity). The span at 209–233 (DAKDKVQDVKADASRAADQAKDKAQ) shows a compositional bias: basic and acidic residues. Over residues 275 to 298 (GSTTNNAGTAGNTGMTGNTNTRKN) the composition is skewed to low complexity.

It belongs to the LEA type 1 family.

This is Protein DR_1172 from Deinococcus radiodurans (strain ATCC 13939 / DSM 20539 / JCM 16871 / CCUG 27074 / LMG 4051 / NBRC 15346 / NCIMB 9279 / VKM B-1422 / R1).